A 518-amino-acid polypeptide reads, in one-letter code: Ribonuclease Y (518 aa).

The chain crosses the membrane as a helical span at residues 2–22 (VLNILLAIVGLIVGLGLGFVI). The tract at residues 91–119 (QREQTLDRKDDSLEKREGSLEEKEEKLGA) is disordered. The KH domain maps to 208 to 268 (TVSVVTLPND…IRREIARMTL (61 aa)). Residues 334 to 427 (VLNHSIEVAK…VAAADALSAA (94 aa)) form the HD domain.

The protein belongs to the RNase Y family.

Its subcellular location is the cell membrane. Endoribonuclease that initiates mRNA decay. This chain is Ribonuclease Y, found in Enterococcus faecalis (strain ATCC 700802 / V583).